Here is a 530-residue protein sequence, read N- to C-terminus: Ubiquitin carboxyl-terminal hydrolase 17-like protein 20 (530 aa).

A USP domain is found at 80 to 375 (AGLQNMGNTC…QAYVLFYIQK (296 aa)). Cys-89 serves as the catalytic Nucleophile. His-334 functions as the Proton acceptor in the catalytic mechanism. Basic and acidic residues-rich tracts occupy residues 382-392 (SESVSRGREPR) and 398-413 (DTDRRATQGELKRDHP). Disordered regions lie at residues 382-413 (SESVSRGREPRALGAEDTDRRATQGELKRDHP) and 509-530 (RGRARRSKGKNKHSKRALLVCQ). A compositionally biased stretch (basic residues) spans 510 to 524 (GRARRSKGKNKHSKR).

Belongs to the peptidase C19 family. USP17 subfamily.

Its subcellular location is the nucleus. The protein resides in the endoplasmic reticulum. It carries out the reaction Thiol-dependent hydrolysis of ester, thioester, amide, peptide and isopeptide bonds formed by the C-terminal Gly of ubiquitin (a 76-residue protein attached to proteins as an intracellular targeting signal).. Deubiquitinating enzyme that removes conjugated ubiquitin from specific proteins to regulate different cellular processes that may include cell proliferation, progression through the cell cycle, apoptosis, cell migration, and the cellular response to viral infection. The polypeptide is Ubiquitin carboxyl-terminal hydrolase 17-like protein 20 (USP17L20) (Homo sapiens (Human)).